A 327-amino-acid polypeptide reads, in one-letter code: ATP-dependent 6-phosphofructokinase (327 aa).

ATP-binding positions include G11, 72–73 (RS), and 102–105 (GDGS). Residue D103 coordinates Mg(2+). 127–129 (TID) contributes to the substrate binding site. Residue D129 is the Proton acceptor of the active site. R156 provides a ligand contact to ADP. Substrate contacts are provided by residues R164 and 171–173 (MGR). ADP is bound at residue 187 to 189 (GAE). Residues E224, R245, and 251-254 (HIQR) each bind substrate.

This sequence belongs to the phosphofructokinase type A (PFKA) family. ATP-dependent PFK group I subfamily. Prokaryotic clade 'B1' sub-subfamily. As to quaternary structure, homotetramer. Mg(2+) is required as a cofactor.

It is found in the cytoplasm. It catalyses the reaction beta-D-fructose 6-phosphate + ATP = beta-D-fructose 1,6-bisphosphate + ADP + H(+). It functions in the pathway carbohydrate degradation; glycolysis; D-glyceraldehyde 3-phosphate and glycerone phosphate from D-glucose: step 3/4. Its activity is regulated as follows. Allosterically activated by ADP and other diphosphonucleosides, and allosterically inhibited by phosphoenolpyruvate. In terms of biological role, catalyzes the phosphorylation of D-fructose 6-phosphate to fructose 1,6-bisphosphate by ATP, the first committing step of glycolysis. The sequence is that of ATP-dependent 6-phosphofructokinase from Sulfurovum sp. (strain NBC37-1).